Reading from the N-terminus, the 148-residue chain is MKPRNINNSLPLQPLVPDQENKNKKNEEKSVNPVKITMGSGLNYIEQESLGGKYLTHDLSIKIADISEEIIQQAILSAMSIYKFSITDDLMSMAVNELIKLTKIENNVDLNKFTTICTDVLSPRVTRHNKEKNKRHSTLLKNPLFNFH.

Positions 1-11 (MKPRNINNSLP) are enriched in polar residues. Positions 1 to 31 (MKPRNINNSLPLQPLVPDQENKNKKNEEKSV) are disordered. A compositionally biased stretch (basic and acidic residues) spans 19–30 (QENKNKKNEEKS).

This is an uncharacterized protein from Escherichia coli (strain K12).